We begin with the raw amino-acid sequence, 229 residues long: Large ribosomal subunit protein uL1 (229 aa).

As to quaternary structure, part of the 50S ribosomal subunit.

Functionally, directly binds to 23S rRNA. Forms what is known as the L1 stalk, which protrudes beyond the 70S ribosome surface. The stalk is preferentially stabilized in 70S versus 50S crystals. Interacts with the E site tRNA, blocking the exit path. This blockage implies that this section of the ribosome must be able to move to release the deacetylated tRNA. In terms of biological role, protein L1 is also a translational repressor protein, it controls the translation of the L11 operon by binding to its mRNA. The protein is Large ribosomal subunit protein uL1 (rplA) of Thermus thermophilus (strain ATCC 27634 / DSM 579 / HB8).